The following is a 535-amino-acid chain: Suppressor of cytokine signaling 6 (535 aa).

The span at 80–89 (RLSAKQKSKG) shows a compositional bias: basic residues. A disordered region spans residues 80-105 (RLSAKQKSKGKAGTPSGSSADEDTFS). In terms of domain architecture, SH2 spans 384 to 491 (WYWGPITRWE…TYPVRLTNPV (108 aa)). An SOCS box domain is found at 486–535 (RLTNPVSRFMQVRSLQYLCRFVIRQYTRIDLIQKLPLPNKMKDYLQEKHY).

Interacts with RBCK1. Interacts with phosphorylated IRS4. Interacts with PIM3. Interacts with KIT (phosphorylated).

It participates in protein modification; protein ubiquitination. In terms of biological role, SOCS family proteins form part of a classical negative feedback system that regulates cytokine signal transduction. May be a substrate recognition component of a SCF-like ECS (Elongin BC-CUL2/5-SOCS-box protein) E3 ubiquitin-protein ligase complex which mediates the ubiquitination and subsequent proteasomal degradation of target proteins. Regulates KIT degradation by ubiquitination of the tyrosine-phosphorylated receptor. This is Suppressor of cytokine signaling 6 (SOCS6) from Homo sapiens (Human).